The sequence spans 110 residues: Ribonuclease P protein component 4 (110 aa).

4 residues coordinate Zn(2+): Cys65, Cys68, Cys94, and Cys97.

It belongs to the eukaryotic/archaeal RNase P protein component 4 family. In terms of assembly, consists of a catalytic RNA component and at least 4-5 protein subunits. Zn(2+) serves as cofactor.

The protein resides in the cytoplasm. The enzyme catalyses Endonucleolytic cleavage of RNA, removing 5'-extranucleotides from tRNA precursor.. Part of ribonuclease P, a protein complex that generates mature tRNA molecules by cleaving their 5'-ends. This Methanococcus maripaludis (strain C7 / ATCC BAA-1331) protein is Ribonuclease P protein component 4.